The sequence spans 617 residues: Sodium-dependent noradrenaline transporter (617 aa).

The disordered stretch occupies residues 1–23; sequence MLLARMNPQVQPENNGADTGPEQ. Over 1–62 the chain is Cytoplasmic; it reads MLLARMNPQV…AQPRETWGKK (62 aa). Polar residues predominate over residues 8–17; it reads PQVQPENNGA. Residues 63–88 traverse the membrane as a helical segment; the sequence is IDFLLSVVGFAVDLANVWRFPYLCYK. Na(+) is bound by residues glycine 71, alanine 73, and valine 74. Aspartate 75 is a (R)-noradrenaline binding site. Aspartate 75 is a dopamine binding site. Position 78 (asparagine 78) interacts with Na(+). Positions 87 and 88 each coordinate (R)-noradrenaline. Over 89 to 92 the chain is Extracellular; that stretch reads NGGG. Residues 93 to 116 form a helical membrane-spanning segment; the sequence is AFLIPYTLFLIIAGMPLFYMELAL. At 117–135 the chain is on the cytoplasmic side; sequence GQYNREGAATVWKICPFFK. Residues 136 to 166 traverse the membrane as a helical segment; the sequence is GVGYAVILIALYVGFYYNVIIAWSLYYLFSS. Positions 145 and 149 each coordinate (R)-noradrenaline. Alanine 145 is a binding site for dopamine. Residues 167–233 are Extracellular-facing; that stretch reads FTLNLPWTDC…SSGIHDIGLP (67 aa). A disulfide bridge links cysteine 176 with cysteine 185. N-linked (GlcNAc...) asparagine glycosylation is found at asparagine 184, asparagine 192, and asparagine 198. The chain crosses the membrane as a helical span at residues 234–254; the sequence is QWQLLLCLMVVVIVLYFSLWK. The Cytoplasmic segment spans residues 255 to 257; that stretch reads GVK. The chain crosses the membrane as a helical span at residues 258-282; sequence TSGKVVWITATLPYFVLFVLLVHGV. Residues 283–306 lie on the Extracellular side of the membrane; the sequence is TLPGASNGINAYLHIDFYRLKEAT. A helical membrane pass occupies residues 307 to 332; the sequence is VWIDAATQIFFSLGAGFGVLIAFASY. Residue phenylalanine 317 participates in (R)-noradrenaline binding. Phenylalanine 317 contributes to the dopamine binding site. Serine 318 is a binding site for Na(+). Residues 333-338 are Cytoplasmic-facing; the sequence is NKFDNN. The chain crosses the membrane as a helical span at residues 339-362; it reads CYRDALLTSSINCITSFVSGFAIF. Asparagine 350 contributes to the Na(+) binding site. Residues 363–402 are Extracellular-facing; the sequence is SILGYMAHEHKVNIEDVATEGAGLVFILYPEAISTLSGST. Glutamate 382 contacts (R)-noradrenaline. Glutamate 382 is a dopamine binding site. The chain crosses the membrane as a helical span at residues 403–428; sequence FWAVVFFVMLLALGLDSSMGGMEAVI. Aspartate 418 and serine 419 together coordinate Na(+). Residues 429–443 lie on the Cytoplasmic side of the membrane; sequence TGLADDFQVLKRHRK. A helical transmembrane segment spans residues 444–464; that stretch reads LFTFGVTFSTFLLALFCITKG. A topological domain (extracellular) is located at residue glycine 465. A helical membrane pass occupies residues 466–492; that stretch reads IYVLTLLDTFAAGTSILFAVLMEAIGV. The Cytoplasmic segment spans residues 493-522; it reads SWFYGVDRFSNDIQQMMGFRPGLYWRLCWK. The chain crosses the membrane as a helical span at residues 523–545; sequence FVSPAFLLFVVVVSIINFKPLTY. Topologically, residues 546 to 548 are extracellular; the sequence is DDY. A helical transmembrane segment spans residues 549–569; the sequence is IFPPWANWVGWGIALSSMVLV. At 570–617 the chain is on the cytoplasmic side; it reads PIYVIYKFLSTQGSLWERLAYGITPENEHHLVAQRDIRQFQLQHWLAI.

Belongs to the sodium:neurotransmitter symporter (SNF) (TC 2.A.22) family. SLC6A2 subfamily. As to quaternary structure, monomer. Can form homodimers in the cell membrane; homodimerization is mostly mediated by cholesterol and lipids, and regulates neurotransmitter transport activity. Interacts with PRKCABP. In terms of processing, palmitoylated; palmitoylation regulates protein levels and neurotransmitter transport.

The protein localises to the cell membrane. The protein resides in the cell projection. It localises to the axon. Its subcellular location is the synapse. It is found in the synaptosome. It catalyses the reaction (R)-noradrenaline(out) + chloride(out) + Na(+)(out) = (R)-noradrenaline(in) + chloride(in) + Na(+)(in). The enzyme catalyses dopamine(out) + chloride(out) + Na(+)(out) = dopamine(in) + chloride(in) + Na(+)(in). The catalysed reaction is dopamine(out) + chloride(out) + 2 Na(+)(out) = dopamine(in) + chloride(in) + 2 Na(+)(in). Its activity is regulated as follows. Inhibited by mazindol, desipramine, nomifensine and nortriptyline. In terms of biological role, mediates sodium- and chloride-dependent transport of norepinephrine (also known as noradrenaline), the primary signaling neurotransmitter in the autonomic sympathetic nervous system. Is responsible for norepinephrine re-uptake and clearance from the synaptic cleft, thus playing a crucial role in norepinephrine inactivation and homeostasis. Can also mediate sodium- and chloride-dependent transport of dopamine. The protein is Sodium-dependent noradrenaline transporter of Homo sapiens (Human).